Consider the following 355-residue polypeptide: uncharacterized protein (355 aa).

The segment at 1–61 is disordered; the sequence is MNKKIEKNNN…PKRRGRRPKK (61 aa). Over residues 18–37 the composition is skewed to polar residues; that stretch reads YESNTTDNQLIMKKNANSGS.

This is an uncharacterized protein from Acanthamoeba polyphaga mimivirus (APMV).